A 319-amino-acid chain; its full sequence is ATP-dependent 6-phosphofructokinase (319 aa).

G11 contributes to the ATP binding site. 21–25 lines the ADP pocket; it reads RAVVR. Residues 72 to 73 and 102 to 105 each bind ATP; these read RC and GDGS. D103 contributes to the Mg(2+) binding site. 125 to 127 is a binding site for substrate; that stretch reads TID. Catalysis depends on D127, which acts as the Proton acceptor. R154 is an ADP binding site. Substrate is bound by residues R162 and 169-171; that span reads MGR. Residues 185–187, K211, and 213–215 each bind ADP; these read GAE and KMH. Substrate-binding positions include E222, R243, and 249 to 252; that span reads HIQR.

The protein belongs to the phosphofructokinase type A (PFKA) family. ATP-dependent PFK group I subfamily. Prokaryotic clade 'B1' sub-subfamily. As to quaternary structure, homotetramer. Requires Mg(2+) as cofactor.

The protein resides in the cytoplasm. The catalysed reaction is beta-D-fructose 6-phosphate + ATP = beta-D-fructose 1,6-bisphosphate + ADP + H(+). Its pathway is carbohydrate degradation; glycolysis; D-glyceraldehyde 3-phosphate and glycerone phosphate from D-glucose: step 3/4. Allosterically activated by ADP and other diphosphonucleosides, and allosterically inhibited by phosphoenolpyruvate. Its function is as follows. Catalyzes the phosphorylation of D-fructose 6-phosphate to fructose 1,6-bisphosphate by ATP, the first committing step of glycolysis. The chain is ATP-dependent 6-phosphofructokinase from Clostridium botulinum (strain ATCC 19397 / Type A).